Consider the following 123-residue polypeptide: Protein Wnt-3a (123 aa).

Ser-1 carries the O-palmitoleoyl serine lipid modification. A disulfide bridge connects residues Cys-89 and Cys-104. N-linked (GlcNAc...) asparagine glycosylation occurs at Asn-90.

The protein belongs to the Wnt family. In terms of processing, disulfide bonds have critical and distinct roles in secretion and activity. Loss of each conserved cysteine results in high molecular weight oxidized Wnt oligomers, which are formed through inter-Wnt disulfide bonding. Palmitoleoylation is required for efficient binding to frizzled receptors. Depalmitoleoylation leads to Wnt signaling pathway inhibition.

The protein localises to the secreted. It is found in the extracellular space. The protein resides in the extracellular matrix. Functionally, ligand for members of the frizzled family of seven transmembrane receptors. Functions in the canonical Wnt signaling pathway that results in activation of transcription factors of the TCF/LEF family. Required for normal embryonic mesoderm development and formation of caudal somites. Required for normal morphogenesis of the developing neural tube. The polypeptide is Protein Wnt-3a (WNT3A) (Meleagris gallopavo (Wild turkey)).